A 333-amino-acid chain; its full sequence is Ornithine carbamoyltransferase (333 aa).

Residues 56–59 (STRT), Gln83, Arg107, and 134–137 (HPTQ) contribute to the carbamoyl phosphate site. Residues Asn167, Asp231, and 235–236 (SM) contribute to the L-ornithine site. Carbamoyl phosphate-binding positions include 273–274 (CL) and Arg318.

The protein belongs to the aspartate/ornithine carbamoyltransferase superfamily. OTCase family.

It is found in the cytoplasm. The enzyme catalyses carbamoyl phosphate + L-ornithine = L-citrulline + phosphate + H(+). It functions in the pathway amino-acid biosynthesis; L-arginine biosynthesis; L-arginine from L-ornithine and carbamoyl phosphate: step 1/3. Has vitronectin and fibronectin-binding activity. In terms of biological role, reversibly catalyzes the transfer of the carbamoyl group from carbamoyl phosphate (CP) to the N(epsilon) atom of ornithine (ORN) to produce L-citrulline. The polypeptide is Ornithine carbamoyltransferase (argF) (Staphylococcus epidermidis (strain ATCC 12228 / FDA PCI 1200)).